The following is a 488-amino-acid chain: MKKAIIIGSGIAGLAAALRLKKKGYQVSVFEKNDYAGGKLHAIELGGYRFDLGPSLFTLPHLIDELHQLFPDVEIDFNYIKKKTACHYFWEDGTSFEAPADLENFAVKAAEIFDEKQNTLSKYLQNSKMKYESTKSLFLEKSLHKSNTYFSKQTLKAILKIPFLGINNTLDQENKKFSNPKLNQLFNRYATYNGSSPYLTPGIMSMIPYLELGLGTYYPQGGMHRISQSLFELAQKVGVEFRFRKNVKKINHSNNKVTGVTTEKGTHDADIVLCNMDVFPTYRQLLQDIKAPEKTLKQERSSSALIFYWGIKKSFPQLDLHNILFSENYKAEFEAIFNNKSLYEDPTVYINITSKQSPQDAPKGCENWFVMINTPGDYGQNWENLVIKAKKNILSKIKRCLNIDVEELIDVEYVLTPQGIEKNTSSYRGALYGAASNNKFAAFLRHPNFNKTIGNLYHVGGSVHPGGGIPLCLLSAKITADLIPNTNA.

Residues Glu31, Lys39, 55–56 (SL), Val247, Asn275, Leu431, Gly461, and 468–469 (GI) contribute to the FAD site.

The protein belongs to the carotenoid/retinoid oxidoreductase family. In terms of assembly, monomer.

It catalyses the reaction rhodopin + A = (3E)-3,4-didehydrorhodopin + AH2. It carries out the reaction 1'-hydroxy-gamma-carotene + A = 1'-hydroxytorulene + AH2. The enzyme catalyses 1-hydroxy-all-trans-1,2-dihydro-neurosporene + A = demethylspheroidene + AH2. The catalysed reaction is 1,1'-dihydroxy-1,1',2,2'-tetrahydroneurosporene + A = 1'-hydroxy-demethylspheroidene + AH2. It catalyses the reaction 1,1'-dihydroxy-1,1',2,2'-tetrahydrolycopene + A = 1,1'-dihydroxy-3,4-didehydro-1,2-dihydrolycopene + AH2. Its pathway is carotenoid biosynthesis. Catalyzes the introduction of a C-3,4 double bond into 1'-hydroxy-gamma-carotene and rhodopin (1-hydroxylycopene) to yield 1'-hydroxytorulene and (3E)-3,4-didehydrorhodopin, respectively. Can also 1-hydroxy-all-trans-1,2-dihydro-neurosporene, 1,1'-dihydroxy-1,1',2,2'-tetrahydroneurosporene and 1,1'-dihydroxy-1,1',2,2'-tetrahydrolycopene. Probably involved in the synthesis of myxol, a gamma-carotene derivative. May use FAD as a proton acceptor. In Flavobacterium sp. (strain P99-3), this protein is 1-hydroxycarotenoid 3,4-desaturase.